The chain runs to 115 residues: Large ribosomal subunit protein eL30 (115 aa).

A phosphoserine mark is found at serine 10 and serine 16. At lysine 26 the chain carries N6-acetyllysine; alternate. A Glycyl lysine isopeptide (Lys-Gly) (interchain with G-Cter in SUMO2); alternate cross-link involves residue lysine 26.

It belongs to the eukaryotic ribosomal protein eL30 family. In terms of assembly, component of the large ribosomal subunit.

The protein resides in the cytoplasm. Its function is as follows. Component of the large ribosomal subunit. The ribosome is a large ribonucleoprotein complex responsible for the synthesis of proteins in the cell. This is Large ribosomal subunit protein eL30 (RPL30) from Oryctolagus cuniculus (Rabbit).